The following is a 117-amino-acid chain: Large ribosomal subunit protein eL8 (117 aa).

It belongs to the eukaryotic ribosomal protein eL8 family. As to quaternary structure, part of the 50S ribosomal subunit. Part of the RNase P complex.

Its subcellular location is the cytoplasm. The enzyme catalyses Endonucleolytic cleavage of RNA, removing 5'-extranucleotides from tRNA precursor.. Multifunctional RNA-binding protein that recognizes the K-turn motif in ribosomal RNA, the RNA component of RNase P, box H/ACA, box C/D and box C'/D' sRNAs. Part of ribonuclease P, a protein complex that generates mature tRNA molecules by cleaving their 5'-ends, this subunit dramatically stimulates RNase P activity. In Methanococcus maripaludis (strain DSM 14266 / JCM 13030 / NBRC 101832 / S2 / LL), this protein is Large ribosomal subunit protein eL8.